A 151-amino-acid chain; its full sequence is Chaperonin GroEL (151 aa).

41-45 is an ATP binding site; it reads DGTTT.

The protein belongs to the chaperonin (HSP60) family. In terms of assembly, forms a cylinder of 14 subunits composed of two heptameric rings stacked back-to-back. Interacts with the co-chaperonin GroES.

The protein resides in the cytoplasm. It catalyses the reaction ATP + H2O + a folded polypeptide = ADP + phosphate + an unfolded polypeptide.. Functionally, together with its co-chaperonin GroES, plays an essential role in assisting protein folding. The GroEL-GroES system forms a nano-cage that allows encapsulation of the non-native substrate proteins and provides a physical environment optimized to promote and accelerate protein folding. The polypeptide is Chaperonin GroEL (Mycobacterium avium).